The following is a 150-amino-acid chain: L-alanine exporter AlaE (150 aa).

The next 4 membrane-spanning stretches (helical) occupy residues 17–37 (FAMV…ISGM), 48–68 (LSIP…DFML), 86–106 (LVAY…VVGA), and 111–131 (IITA…FYGY).

The protein belongs to the AlaE exporter family.

The protein resides in the cell inner membrane. Its function is as follows. Exports L-alanine. This is L-alanine exporter AlaE from Aliivibrio fischeri (strain ATCC 700601 / ES114) (Vibrio fischeri).